Here is a 465-residue protein sequence, read N- to C-terminus: UDP-N-acetylmuramate--L-alanine ligase (465 aa).

An ATP-binding site is contributed by 112–118 (GTHGKTT).

The protein belongs to the MurCDEF family.

The protein resides in the cytoplasm. It carries out the reaction UDP-N-acetyl-alpha-D-muramate + L-alanine + ATP = UDP-N-acetyl-alpha-D-muramoyl-L-alanine + ADP + phosphate + H(+). The protein operates within cell wall biogenesis; peptidoglycan biosynthesis. Functionally, cell wall formation. This Janthinobacterium sp. (strain Marseille) (Minibacterium massiliensis) protein is UDP-N-acetylmuramate--L-alanine ligase.